Here is a 635-residue protein sequence, read N- to C-terminus: Paraneoplastic antigen-like protein 8B (635 aa).

Disordered regions lie at residues 115 to 202, 260 to 332, and 492 to 635; these read PTQA…DESL, TDKS…NPEF, and AARE…PKCR. Polar residues predominate over residues 133–147; it reads SETQAQDSGEVTGQA. Positions 156–183 are enriched in basic residues; sequence NPRRGRRGRRNRTRRNRLTQKGKKRSRG. Positions 261–273 are enriched in basic and acidic residues; it reads DKSKKEEAEKEPA. Composition is skewed to acidic residues over residues 302–329 and 502–524; these read PDEEPVDSDTSESDSQESGDQETEELDN and GSEEASDEQSEEESEDTESEASE. The span at 531 to 540 shows a compositional bias: basic residues; that stretch reads RKPRAKRART. Low complexity predominate over residues 541–557; sequence APRGLTPAGAPPTASGA. Basic residues-rich tracts occupy residues 558–568 and 619–635; these read RKTRAGGRGRG and ARGKKARRGRRLPPKCR.

The protein belongs to the PNMA family.

The chain is Paraneoplastic antigen-like protein 8B from Homo sapiens (Human).